Consider the following 389-residue polypeptide: MQNLTNLSSRTYDQHFPKLSAEQLAENAKKKVIVGMSGGVDSSVSAFILQQQGYQVEGLFMKNWEEDDDTDYCTAAADLADAQAVADKLGMKLHKINFAAEYWDNVFEHFLAEYKAGRTPNPDILCNKEIKFKAFLEYAAEDLGADYIATGHYVRRRGDDENARLLRGLDSNKDQSYFLYTLSHKQVGQSLFPVGDIEKPIVRAIAEDLGLITAKKKDSTGICFIGERKFKDFLARFLPAQPGEIRTVDGKVIGRHDGLMYYTLGQRKGLGIGGIKGMDENPFYVAEKDLVNNVLIVAQGHDNSALLSSGLIARQLHWVDRQPIRENLRCTVKTRYRQTDIPCEIQPIDDETIRVIFDEPQIAVTPGQSAVFYQGEVCLGGGVIETQIK.

ATP contacts are provided by residues 35–42 (GMSGGVDS) and methionine 61. Residues 121 to 123 (NPD) are interaction with target base in tRNA. Cysteine 126 (nucleophile) is an active-site residue. Residues cysteine 126 and cysteine 223 are joined by a disulfide bond. Glycine 151 serves as a coordination point for ATP. Residues 173–175 (KDQ) are interaction with tRNA. The active-site Cysteine persulfide intermediate is cysteine 223. The interaction with tRNA stretch occupies residues 335 to 336 (RY).

This sequence belongs to the MnmA/TRMU family.

The protein localises to the cytoplasm. The catalysed reaction is S-sulfanyl-L-cysteinyl-[protein] + uridine(34) in tRNA + AH2 + ATP = 2-thiouridine(34) in tRNA + L-cysteinyl-[protein] + A + AMP + diphosphate + H(+). In terms of biological role, catalyzes the 2-thiolation of uridine at the wobble position (U34) of tRNA, leading to the formation of s(2)U34. This is tRNA-specific 2-thiouridylase MnmA from Mannheimia succiniciproducens (strain KCTC 0769BP / MBEL55E).